Consider the following 60-residue polypeptide: Chromatin protein Cren7 (60 aa).

It belongs to the Cren7 family. In terms of assembly, monomer. In terms of processing, methylated at multiple sites, to varying extents.

It is found in the chromosome. Its subcellular location is the cytoplasm. A chromatin protein, binds double-stranded DNA without sequence specificity. Constrains negative DNA supercoils. This is Chromatin protein Cren7 from Saccharolobus islandicus (strain M.16.4 / Kamchatka #3) (Sulfolobus islandicus).